The following is a 126-amino-acid chain: NADH-quinone oxidoreductase subunit A (126 aa).

3 helical membrane-spanning segments follow: residues Ile-11–Leu-31, Phe-64–Ala-84, and Glu-98–Ile-118.

It belongs to the complex I subunit 3 family. NDH-1 is composed of 14 different subunits. Subunits NuoA, H, J, K, L, M, N constitute the membrane sector of the complex.

The protein localises to the cell inner membrane. The catalysed reaction is a quinone + NADH + 5 H(+)(in) = a quinol + NAD(+) + 4 H(+)(out). NDH-1 shuttles electrons from NADH, via FMN and iron-sulfur (Fe-S) centers, to quinones in the respiratory chain. The immediate electron acceptor for the enzyme in this species is believed to be a menaquinone. Couples the redox reaction to proton translocation (for every two electrons transferred, four hydrogen ions are translocated across the cytoplasmic membrane), and thus conserves the redox energy in a proton gradient. The chain is NADH-quinone oxidoreductase subunit A from Cytophaga hutchinsonii (strain ATCC 33406 / DSM 1761 / CIP 103989 / NBRC 15051 / NCIMB 9469 / D465).